The following is a 159-amino-acid chain: Small ribosomal subunit protein uS9 (159 aa).

The protein belongs to the universal ribosomal protein uS9 family.

This Bradyrhizobium diazoefficiens (strain JCM 10833 / BCRC 13528 / IAM 13628 / NBRC 14792 / USDA 110) protein is Small ribosomal subunit protein uS9.